A 434-amino-acid polypeptide reads, in one-letter code: MPLRLEASSADFAPAFAALLAGKRESAQDVNDVVSAILADVRLRGDDALIDYTARFDKMTVSAEGLRFSDDEVDTAVALIEPALRDALALAAKRITRFHERQMPTAISFTDEDGVRLGQRWTAVSAAGLYVPGGLAAYPSSVLMNALPAKVAGVERLVMVVPTPAGRINPLVLAAAKLAGVDEIYRVGGAQAVAALAYGTRTIAPVDKIVGPGNAYVAAAKRQVFGTVGIDMIAGPSEILVVADGANDPDWIALDLLSQAEHDAAAQSILITDDRAFADRVERAVTDRLRTLSRTEIASASWRDHGAIILVGDLLRDAPALVDKVAPEHLELAVADPDALAARVRHAGAIFLGRYTPEAIGDYIAGPNHVLPTSRTARFSSGLGVLDFMKRTTLVGCGAESLGAIGPSAVRLARAEGLEAHGLSVAARMNRGWE.

NAD(+) contacts are provided by Tyr-130, Gln-191, and Asn-214. Residues Ser-237, Gln-259, and His-262 each coordinate substrate. Zn(2+) contacts are provided by Gln-259 and His-262. Residues Glu-328 and His-329 each act as proton acceptor in the active site. Substrate is bound by residues His-329, Asp-362, Glu-416, and His-421. Asp-362 is a Zn(2+) binding site. His-421 contributes to the Zn(2+) binding site.

This sequence belongs to the histidinol dehydrogenase family. Zn(2+) is required as a cofactor.

The enzyme catalyses L-histidinol + 2 NAD(+) + H2O = L-histidine + 2 NADH + 3 H(+). It functions in the pathway amino-acid biosynthesis; L-histidine biosynthesis; L-histidine from 5-phospho-alpha-D-ribose 1-diphosphate: step 9/9. Catalyzes the sequential NAD-dependent oxidations of L-histidinol to L-histidinaldehyde and then to L-histidine. The sequence is that of Histidinol dehydrogenase from Rhodospirillum rubrum (strain ATCC 11170 / ATH 1.1.1 / DSM 467 / LMG 4362 / NCIMB 8255 / S1).